A 124-amino-acid chain; its full sequence is Small polypeptide ROTUNDIFOLIA LIKE 3 (124 aa).

The disordered stretch occupies residues methionine 1 to serine 23. Asparagine 35 and asparagine 38 each carry an N-linked (GlcNAc...) asparagine glycan. Residues alanine 59–serine 75 form a helical membrane-spanning segment. A disordered region spans residues tryptophan 60–lysine 95. Over residues serine 71–glutamine 91 the composition is skewed to low complexity. The N-linked (GlcNAc...) asparagine glycan is linked to asparagine 88. A required for DVL/RTFL small polypeptide activity region spans residues arginine 92 to tyrosine 124.

It belongs to the DVL/RTFL small polypeptides family.

It localises to the cell membrane. Functionally, small polypeptide acting as a regulatory molecule which coordinates cellular responses required for differentiation, growth and development, probably by restricting polar cell proliferation in lateral organs (e.g. leaves and petioles). The protein is Small polypeptide ROTUNDIFOLIA LIKE 3 of Oryza sativa subsp. japonica (Rice).